Reading from the N-terminus, the 346-residue chain is Probable dual-specificity RNA methyltransferase RlmN (346 aa).

Glu90 (proton acceptor) is an active-site residue. Positions 96-330 (TRDRLTVCVS…VSVRASRGLD (235 aa)) constitute a Radical SAM core domain. A disulfide bridge links Cys103 with Cys335. Cys110, Cys114, and Cys117 together coordinate [4Fe-4S] cluster. S-adenosyl-L-methionine contacts are provided by residues 157–158 (GE), Ser187, 216–218 (SLH), and Asn292. Cys335 acts as the S-methylcysteine intermediate in catalysis.

The protein belongs to the radical SAM superfamily. RlmN family. Requires [4Fe-4S] cluster as cofactor.

The protein resides in the cytoplasm. The enzyme catalyses adenosine(2503) in 23S rRNA + 2 reduced [2Fe-2S]-[ferredoxin] + 2 S-adenosyl-L-methionine = 2-methyladenosine(2503) in 23S rRNA + 5'-deoxyadenosine + L-methionine + 2 oxidized [2Fe-2S]-[ferredoxin] + S-adenosyl-L-homocysteine. It catalyses the reaction adenosine(37) in tRNA + 2 reduced [2Fe-2S]-[ferredoxin] + 2 S-adenosyl-L-methionine = 2-methyladenosine(37) in tRNA + 5'-deoxyadenosine + L-methionine + 2 oxidized [2Fe-2S]-[ferredoxin] + S-adenosyl-L-homocysteine. In terms of biological role, specifically methylates position 2 of adenine 2503 in 23S rRNA and position 2 of adenine 37 in tRNAs. This chain is Probable dual-specificity RNA methyltransferase RlmN, found in Synechococcus sp. (strain RCC307).